We begin with the raw amino-acid sequence, 281 residues long: MRLIESIREMTAWSREQAREGRTIGFVPTMGYLHEGHLTLMRRAREACDRVVVSIFVNPLQFGAGEDFAEYPRDLIRDSRLAESAGVDVLFAPSAREMYPKGYHTFVDVERLTEGLCGASRPGHFRGVTTVVCKLFNIVRPDVAYFGQKDAQQLAVIRRMTEDLNLPVSVVGVPIVREADGLAMSSRNVYLSPQERQAALVLSRALARARELIEGGERDVARLRQIITETITAEPLAAIDYVSIVDNRFIQPVETLAGECLIALAVRIGKRRLIDNMVVEV.

30-37 contacts ATP; it reads MGYLHEGH. His37 acts as the Proton donor in catalysis. Gln61 contributes to the (R)-pantoate binding site. Gln61 is a binding site for beta-alanine. Position 147–150 (147–150) interacts with ATP; the sequence is GQKD. A (R)-pantoate-binding site is contributed by Gln153. ATP-binding positions include Val176 and 184–187; that span reads MSSR.

It belongs to the pantothenate synthetase family. As to quaternary structure, homodimer.

It is found in the cytoplasm. It catalyses the reaction (R)-pantoate + beta-alanine + ATP = (R)-pantothenate + AMP + diphosphate + H(+). It participates in cofactor biosynthesis; (R)-pantothenate biosynthesis; (R)-pantothenate from (R)-pantoate and beta-alanine: step 1/1. Catalyzes the condensation of pantoate with beta-alanine in an ATP-dependent reaction via a pantoyl-adenylate intermediate. The chain is Pantothenate synthetase from Heliobacterium modesticaldum (strain ATCC 51547 / Ice1).